We begin with the raw amino-acid sequence, 143 residues long: Transcription antitermination protein NusB (143 aa).

This sequence belongs to the NusB family.

In terms of biological role, involved in transcription antitermination. Required for transcription of ribosomal RNA (rRNA) genes. Binds specifically to the boxA antiterminator sequence of the ribosomal RNA (rrn) operons. The polypeptide is Transcription antitermination protein NusB (Clostridium botulinum (strain Kyoto / Type A2)).